The primary structure comprises 310 residues: Aspartate carbamoyltransferase catalytic subunit (310 aa).

Residues arginine 55 and threonine 56 each coordinate carbamoyl phosphate. Lysine 83 is a binding site for L-aspartate. Positions 105, 136, and 139 each coordinate carbamoyl phosphate. 2 residues coordinate L-aspartate: arginine 169 and arginine 223. Carbamoyl phosphate is bound by residues glycine 264 and proline 265.

Belongs to the aspartate/ornithine carbamoyltransferase superfamily. ATCase family. Heterododecamer (2C3:3R2) of six catalytic PyrB chains organized as two trimers (C3), and six regulatory PyrI chains organized as three dimers (R2).

The catalysed reaction is carbamoyl phosphate + L-aspartate = N-carbamoyl-L-aspartate + phosphate + H(+). The protein operates within pyrimidine metabolism; UMP biosynthesis via de novo pathway; (S)-dihydroorotate from bicarbonate: step 2/3. Catalyzes the condensation of carbamoyl phosphate and aspartate to form carbamoyl aspartate and inorganic phosphate, the committed step in the de novo pyrimidine nucleotide biosynthesis pathway. This is Aspartate carbamoyltransferase catalytic subunit from Saccharopolyspora erythraea (strain ATCC 11635 / DSM 40517 / JCM 4748 / NBRC 13426 / NCIMB 8594 / NRRL 2338).